The following is a 165-amino-acid chain: E3 ubiquitin-protein ligase RNF181 (165 aa).

The RING-type; atypical zinc finger occupies 88–129; sequence CPVCLLEFEEEETVIEMPCHHLFHSNCILPWLSKTNSCPLCR. Residues 136–165 form a disordered region; that stretch reads DDSYEEHKKDKARRQQQQHRLENLHGAMYT. Position 165 is a phosphothreonine (Thr165).

This sequence belongs to the RNF181 family. In terms of assembly, directly interacts with ITGA2B and, as a result, with integrin ITGA2B/ITGB3. There is no evidence that integrin ITGA2B/ITGB3 is an endogenous substrate for RNF181-directed ubiquitination. Post-translationally, auto-ubiquitinated as part of the enzymatic reaction.

The catalysed reaction is S-ubiquitinyl-[E2 ubiquitin-conjugating enzyme]-L-cysteine + [acceptor protein]-L-lysine = [E2 ubiquitin-conjugating enzyme]-L-cysteine + N(6)-ubiquitinyl-[acceptor protein]-L-lysine.. The protein operates within protein modification; protein ubiquitination. Its function is as follows. E3 ubiquitin-protein ligase which accepts ubiquitin from an E2 ubiquitin-conjugating enzyme in the form of a thioester and then directly transfers the ubiquitin to targeted substrates. Catalyzes monoubiquitination of 26S proteasome subunit PSMC2/RPT1. The protein is E3 ubiquitin-protein ligase RNF181 (Rnf181) of Rattus norvegicus (Rat).